The chain runs to 75 residues: Sec-independent protein translocase protein TatA (75 aa).

Residues 1–21 form a helical membrane-spanning segment; sequence MGMPSMPELLIVLAIVVLLFG. The tract at residues 47-75 is disordered; it reads DEEEEVKEITKKEEPKVEAAAEEKKSENA. Residues 53-75 show a composition bias toward basic and acidic residues; that stretch reads KEITKKEEPKVEAAAEEKKSENA.

The protein belongs to the TatA/E family. In terms of assembly, the Tat system comprises two distinct complexes: a TatABC complex, containing multiple copies of TatA, TatB and TatC subunits, and a separate TatA complex, containing only TatA subunits. Substrates initially bind to the TatABC complex, which probably triggers association of the separate TatA complex to form the active translocon.

It localises to the cell inner membrane. Its function is as follows. Part of the twin-arginine translocation (Tat) system that transports large folded proteins containing a characteristic twin-arginine motif in their signal peptide across membranes. TatA could form the protein-conducting channel of the Tat system. This is Sec-independent protein translocase protein TatA from Sulfurovum sp. (strain NBC37-1).